The following is a 529-amino-acid chain: Glucose-6-phosphate isomerase (529 aa).

Glutamate 322 acts as the Proton donor in catalysis. Catalysis depends on residues histidine 351 and lysine 455.

The protein belongs to the GPI family.

The protein resides in the cytoplasm. It catalyses the reaction alpha-D-glucose 6-phosphate = beta-D-fructose 6-phosphate. It participates in carbohydrate biosynthesis; gluconeogenesis. Its pathway is carbohydrate degradation; glycolysis; D-glyceraldehyde 3-phosphate and glycerone phosphate from D-glucose: step 2/4. In terms of biological role, catalyzes the reversible isomerization of glucose-6-phosphate to fructose-6-phosphate. This chain is Glucose-6-phosphate isomerase, found in Acaryochloris marina (strain MBIC 11017).